The following is a 395-amino-acid chain: Fractalkine (395 aa).

The signal sequence occupies residues 1-24 (MAPSPLAWLLRLAAFFHLCTLLPG). The chemokine and involved in interaction with ITGAV:ITGB3 and ITGA4:ITGB1 stretch occupies residues 25 to 100 (QHLGMTKCEI…HQAAALTKNG (76 aa)). Residues 25-336 (QHLGMTKCEI…TPVPDTQAAT (312 aa)) are Extracellular-facing. Disulfide bonds link Cys-32–Cys-58 and Cys-36–Cys-74. The mucin-like stalk stretch occupies residues 101-336 (GKFEKRVDNV…TPVPDTQAAT (236 aa)). Composition is skewed to polar residues over residues 148–172 (ARGT…TSEA) and 201–210 (AVYQSGSSSW). Disordered regions lie at residues 148–180 (ARGT…LTAK) and 201–305 (AVYQ…SGSQ). The segment covering 218–236 (SPSTTAPSPQVSTTSPSTP) has biased composition (low complexity). Residues 337–357 (RRQAVGLLAFLGLLFCLGVAM) form a helical membrane-spanning segment. The Cytoplasmic segment spans residues 358 to 395 (FAYQSLQGCPRKMAGEMVEGLRYVPRSCGSNSYVLVPV).

This sequence belongs to the intercrine delta family. As to quaternary structure, monomer. Forms a ternary complex with CX3CR1 and ITGAV:ITGB3 or ITGA4:ITGB1. Post-translationally, a soluble short 80 kDa form may be released by proteolytic cleavage from the long membrane-anchored form. Highest levels in brain. Lower levels in kidney, heart and lung. Also found in skeletal muscle and testis. Highly expressed in lesional smooth muscle cells, but not macrophages. Low levels of ABCD-3 mRNA were also found in anti-CD40-stimulated splenic B-cells, but not in resting B-cells. Also expressed in dendritic cells.

The protein resides in the cell membrane. The protein localises to the secreted. Its function is as follows. Chemokine that acts as a ligand for both CX3CR1 and integrins ITGAV:ITGB3 and ITGA4:ITGB1. The CX3CR1-CX3CL1 signaling exerts distinct functions in different tissue compartments, such as immune response, inflammation, cell adhesion and chemotaxis. Regulates leukocyte adhesion and migration processes at the endothelium. Can activate integrins in both a CX3CR1-dependent and CX3CR1-independent manner. In the presence of CX3CR1, activates integrins by binding to the classical ligand-binding site (site 1) in integrins. In the absence of CX3CR1, binds to a second site (site 2) in integrins which is distinct from site 1 and enhances the binding of other integrin ligands to site 1. Functionally, the soluble form is chemotactic for T-cells and monocytes, but not for neutrophils. The membrane-bound form promotes adhesion of those leukocytes to endothelial cells. The polypeptide is Fractalkine (Mus musculus (Mouse)).